We begin with the raw amino-acid sequence, 411 residues long: Protein translocase subunit SecY (411 aa).

Transmembrane regions (helical) follow at residues 13-33, 52-72, 111-131, 135-155, 163-180, 197-217, 252-272, 291-311, 350-370, and 377-397; these read FTLLLLVLARLGIFIPVPGID, IFSGGGFSTIGIFALGIVPYI, ALGWATLQSGAISIWVKPYVF, FTFVCESVLALTAGSMIIMWL, GIGNGASLLIFQNIVSGL, SIKFGLFIVIFLLMIIITIFV, GVMPIVFASASMALPAYLTQL, LYLVLYSVLILFFSYFYTSIV, FLGATFLFTVALIPFIIEKVA, and GLGATSLLILVGVAIDTAKQI.

It belongs to the SecY/SEC61-alpha family. Component of the plastid Sec protein translocase complex, which is composed of at least SecY, SecE and SecG.

The protein resides in the plastid. It is found in the chloroplast thylakoid membrane. Its function is as follows. The central subunit of the protein translocation channel SecYE. Consists of two halves formed by TMs 1-5 and 6-10. These two domains form a lateral gate at the front which open onto the bilayer between TMs 2 and 7, and are clamped together by SecE at the back. The channel is closed by both a pore ring composed of hydrophobic SecY resides and a short helix (helix 2A) on the extracellular side of the membrane which forms a plug. In Porphyra purpurea (Red seaweed), this protein is Protein translocase subunit SecY.